A 654-amino-acid polypeptide reads, in one-letter code: Protein fem-1 homolog A-like (654 aa).

ANK repeat units lie at residues Asp-2 to Leu-31, Gly-40 to Ala-70, Glu-82 to Arg-111, Thr-115 to Val-145, His-149 to Arg-178, Lys-182 to Arg-211, and Tyr-214 to Gln-243. Phosphoserine is present on Ser-108. The interval His-241–Pro-265 is disordered. Positions Gly-253–Ser-263 are enriched in polar residues. TPR repeat units lie at residues Val-283 to Gly-317 and Ser-375 to Asn-408. ANK repeat units lie at residues Asn-519–Ser-561 and Asp-565–Ala-594. Ser-608 bears the Phosphoserine mark.

The protein belongs to the fem-1 family. Component of a CRL2 E3 ubiquitin-protein ligase complex, also named ECS (Elongin BC-CUL2/5-SOCS-box protein) complex, composed of CUL2, Elongin BC (ELOB and ELOC), RBX1 and substrate-specific adapter FEM1A.

It localises to the mitochondrion. Its subcellular location is the cytoplasm. It functions in the pathway protein modification; protein ubiquitination. In terms of biological role, substrate-recognition component of a Cul2-RING (CRL2) E3 ubiquitin-protein ligase complex of the DesCEND (destruction via C-end degrons) pathway, which recognizes a C-degron located at the extreme C terminus of target proteins, leading to their ubiquitination and degradation. The C-degron recognized by the DesCEND pathway is usually a motif of less than ten residues and can be present in full-length proteins, truncated proteins or proteolytically cleaved forms. The CRL2(FEM1A) complex specifically recognizes proteins with an arginine at the C-terminus: recognizes and binds proteins ending with -Lys/Arg-Xaa-Arg and -Lys/Arg-Xaa-Xaa-Arg C-degrons, such as SIL1 or OR51B2, leading to their ubiquitination and degradation. In Mus musculus (Mouse), this protein is Protein fem-1 homolog A-like.